A 134-amino-acid chain; its full sequence is Small ribosomal subunit protein uS8c (134 aa).

It belongs to the universal ribosomal protein uS8 family. Part of the 30S ribosomal subunit.

Its subcellular location is the plastid. The protein resides in the chloroplast. One of the primary rRNA binding proteins, it binds directly to 16S rRNA central domain where it helps coordinate assembly of the platform of the 30S subunit. This is Small ribosomal subunit protein uS8c (rps8) from Nicotiana tabacum (Common tobacco).